Reading from the N-terminus, the 759-residue chain is Inhibitor of nuclear factor kappa-B kinase subunit alpha (759 aa).

Residues 1–20 (MERGAERGPPPAPGGVALRG) are disordered. Residues 29–316 (WEMRDRLGTG…PETNSPKCFL (288 aa)) form the Protein kinase domain. ATP is bound by residues 35–43 (LGTGGFGNV) and Lys58. Asp158 functions as the Proton acceptor in the catalytic mechanism. Residues 469-490 (LLRYNANLIKMKNNMVSASQQL) are leucine-zipper. A compositionally biased stretch (polar residues) spans 691–703 (TPAATWVPQSSSE). The interval 691–715 (TPAATWVPQSSSEYAPHPLSSMATP) is disordered. Residues 753–758 (FDWSWL) form an NEMO-binding region.

This sequence belongs to the protein kinase superfamily. Ser/Thr protein kinase family. I-kappa-B kinase subfamily.

Its subcellular location is the cytoplasm. The protein localises to the nucleus. The enzyme catalyses L-seryl-[I-kappa-B protein] + ATP = O-phospho-L-seryl-[I-kappa-B protein] + ADP + H(+). Activated when phosphorylated and inactivated when dephosphorylated. In terms of biological role, phosphorylates inhibitors of NF-kappa-B thus leading to the dissociation of the inhibitor/NF-kappa-B complex and ultimately the degradation of the inhibitor. Phosphorylates 'Ser-10' of histone H3 at NF-kappa-B-regulated promoters during inflammatory responses triggered by cytokines. The protein is Inhibitor of nuclear factor kappa-B kinase subunit alpha (CHUK) of Gallus gallus (Chicken).